The following is a 341-amino-acid chain: Uroporphyrinogen decarboxylase (341 aa).

Residues 26-30 (RQAGR), Asp75, Tyr150, Ser205, and His318 each bind substrate.

The protein belongs to the uroporphyrinogen decarboxylase family. In terms of assembly, homodimer.

The protein resides in the cytoplasm. The enzyme catalyses uroporphyrinogen III + 4 H(+) = coproporphyrinogen III + 4 CO2. It functions in the pathway porphyrin-containing compound metabolism; protoporphyrin-IX biosynthesis; coproporphyrinogen-III from 5-aminolevulinate: step 4/4. In terms of biological role, catalyzes the decarboxylation of four acetate groups of uroporphyrinogen-III to yield coproporphyrinogen-III. This chain is Uroporphyrinogen decarboxylase, found in Thermus thermophilus (strain ATCC 27634 / DSM 579 / HB8).